The following is a 380-amino-acid chain: Alkaline protease (380 aa).

Positions 1–27 are cleaved as a signal peptide; it reads MKKPLGKIVASTALLISVAFSSSIASA. The propeptide occupies 28 to 112; that stretch reads AEEAKEKYLI…EEDAEVTTMA (85 aa). Residues 34-111 form the Inhibitor I9 domain; sequence KYLIGFNEQE…IEEDAEVTTM (78 aa). Gln113 contributes to the Ca(2+) binding site. A Peptidase S8 domain is found at 116–379; it reads PWGISRVQAP…SGLVNAEAAT (264 aa). Asp143 (charge relay system) is an active-site residue. Asp151 is a Ca(2+) binding site. His173 serves as the catalytic Charge relay system. The Ca(2+) site is built by Leu184, Asn186, Ile188, Val190, Ala274, Tyr276, and Ala279. Ser326 (charge relay system) is an active-site residue.

It belongs to the peptidase S8 family. The cofactor is Ca(2+).

It localises to the secreted. In Alkalihalobacillus alcalophilus (Bacillus alcalophilus), this protein is Alkaline protease.